Here is a 178-residue protein sequence, read N- to C-terminus: MLHIEFITDLGAKVTVDVESADKLLDVQRQYGRLGWTSGEVPVGGYQFPLENEPDFDWSLIGARKWTNPEGEEMILHRGHAYRRRELEAVDSRKMKLPAAVKYSRGAKNTDPEHVREKADGEFEYVTLAIFRGGKRQERYAVPGSNRPQAGAPARSAATRAQGARPGAVAVQDEETPF.

The disordered stretch occupies residues 139-178 (RYAVPGSNRPQAGAPARSAATRAQGARPGAVAVQDEETPF). Positions 147 to 165 (RPQAGAPARSAATRAQGAR) are enriched in low complexity.

In terms of assembly, homopentamer; arranged in a ring-structure.

Functionally, ssDNA-binding protein that probably contributes to the ionizing radiation resistance of D.geothermalis. Plays a role in DNA repair and genome reconstitution, in a RecA-independent process, and is necessary for recovery from severe genomic fragmentation as a result of exposure to severe levels of ionizing radiation. Binds single-stranded DNA but not duplex DNA. The sequence is that of Single-stranded DNA-binding protein DdrB (ddrB) from Deinococcus geothermalis (strain DSM 11300 / CIP 105573 / AG-3a).